The chain runs to 644 residues: Macrolide export ATP-binding/permease protein MacB (644 aa).

The ABC transporter domain occupies 4–242 (IECKNINRYF…SNVGRIQEKA (239 aa)). 40–47 (GQSGSGKS) contacts ATP. Transmembrane regions (helical) follow at residues 270–290 (LLTM…VALG), 524–544 (IALI…LVSV), 574–594 (LICI…SLVF), and 607–627 (AASV…FGFM).

This sequence belongs to the ABC transporter superfamily. Macrolide exporter (TC 3.A.1.122) family. Homodimer.

Its subcellular location is the cell inner membrane. Functionally, non-canonical ABC transporter that contains transmembrane domains (TMD), which form a pore in the inner membrane, and an ATP-binding domain (NBD), which is responsible for energy generation. Overexpression confers resistance against macrolides. The polypeptide is Macrolide export ATP-binding/permease protein MacB (Neisseria gonorrhoeae).